Consider the following 315-residue polypeptide: MNQLDALREMTVVVADTGDIEAIRQYQPQDATTNPSLILSASALSQYAPLIDDAIRYAKSKSGNKAQQLVDAEDKLAVNIGLEILKIVPGRISTEVDARFSYDTEKTIAKARKLIGLYNEAGVANNRILIKIAATWQGIRAAEILEKEGINCNLTLLFSQAQARACAEAGVYLISPFVGRILDWYKANEKKEYAAAEDPGVISVTAIYNYYKQYNYKTIVMGASFRNVGEITEIAGCDRLTIAPPLLKALAESNETLVRKLDYQGEILDRPAPLSEAEFYWQHNQDPMAVDKLAEGIRKFAIDQEKLEEMLSAKL.

Lys131 functions as the Schiff-base intermediate with substrate in the catalytic mechanism.

Belongs to the transaldolase family. Type 1 subfamily. As to quaternary structure, homodimer.

It localises to the cytoplasm. It carries out the reaction D-sedoheptulose 7-phosphate + D-glyceraldehyde 3-phosphate = D-erythrose 4-phosphate + beta-D-fructose 6-phosphate. Its pathway is carbohydrate degradation; pentose phosphate pathway; D-glyceraldehyde 3-phosphate and beta-D-fructose 6-phosphate from D-ribose 5-phosphate and D-xylulose 5-phosphate (non-oxidative stage): step 2/3. Its function is as follows. Transaldolase is important for the balance of metabolites in the pentose-phosphate pathway. This chain is Transaldolase, found in Haemophilus ducreyi (strain 35000HP / ATCC 700724).